The sequence spans 509 residues: Putative ATP-dependent RNA helicase QP509L (509 aa).

The 153-residue stretch at Lys-110 to Pro-262 folds into the Helicase ATP-binding domain. Leu-123–Thr-130 contacts ATP. A DEAH box motif is present at residues Asp-215 to His-218.

Belongs to the DEAD box helicase family. DEAH subfamily.

It carries out the reaction ATP + H2O = ADP + phosphate + H(+). This African swine fever virus (strain Badajoz 1971 Vero-adapted) (Ba71V) protein is Putative ATP-dependent RNA helicase QP509L.